Consider the following 378-residue polypeptide: Succinyl-diaminopimelate desuccinylase (378 aa).

His-68 contributes to the Zn(2+) binding site. Residue Asp-70 is part of the active site. Residue Asp-101 coordinates Zn(2+). The active-site Proton acceptor is Glu-135. Glu-136, Glu-164, and His-350 together coordinate Zn(2+).

This sequence belongs to the peptidase M20A family. DapE subfamily. As to quaternary structure, homodimer. It depends on Zn(2+) as a cofactor. The cofactor is Co(2+).

It carries out the reaction N-succinyl-(2S,6S)-2,6-diaminopimelate + H2O = (2S,6S)-2,6-diaminopimelate + succinate. It participates in amino-acid biosynthesis; L-lysine biosynthesis via DAP pathway; LL-2,6-diaminopimelate from (S)-tetrahydrodipicolinate (succinylase route): step 3/3. Functionally, catalyzes the hydrolysis of N-succinyl-L,L-diaminopimelic acid (SDAP), forming succinate and LL-2,6-diaminopimelate (DAP), an intermediate involved in the bacterial biosynthesis of lysine and meso-diaminopimelic acid, an essential component of bacterial cell walls. In Acinetobacter baumannii (strain ACICU), this protein is Succinyl-diaminopimelate desuccinylase.